The primary structure comprises 999 residues: Protein Smaug (999 aa).

A compositionally biased stretch (polar residues) spans 1-36; sequence MKYATGTDNAMTSGISGQTNNSNSASNEMQPTTSTP. Disordered stretches follow at residues 1–69 and 329–349; these read MKYA…QSQP and LCPASGSRSSRTNDWQTIAPP. 2 stretches are compositionally biased toward low complexity: residues 44 to 69 and 329 to 338; these read TSTATTTATYANGNPNSNANPSQSQP and LCPASGSRSS. Residues Ser564 and Ser575 each carry the phosphoserine modification. The interval 583–763 is interaction with cup; it reads EFKPNYIKFH…KDLKFKLSKM (181 aa). The 55-residue stretch at 600–654 folds into the SAM domain; that stretch reads GIGLWLKSLRLHKYIELFKNMTYEEMLLITEDFLQSVGVTKGASHKLALCIDKLK. Disordered stretches follow at residues 773–892 and 955–977; these read HVKP…MQQM and QQSQQQQQQRKLSGGVSSAEQQP. 2 stretches are compositionally biased toward polar residues: residues 801-822 and 854-864; these read KNGSNDRINNRKNSNDMLNFSL and HQPQYKSSSYP. Ser972 is subject to Phosphoserine.

The protein belongs to the SMAUG family. In terms of assembly, interacts with oskar (osk). Binds to the 3'-UTR of nanos (nos). Interacts with cup, which in turn recruits eIF4-E, leading to an indirect interaction between smg and eIF4-E that prevents mRNA translation. Forms a complex with aub, twin, AGO3, nanos mRNA and piRNAs that targets the nanos 3'-untranslated region, in early embryos. At syncytial blastoderm, it is located throughout the bulk cytoplasm and pole plasm. By the time of cellularization, it concentrates at the posterior pole.

The protein localises to the cytoplasm. Its function is as follows. Translation regulator that binds to the 3'-UTR of specific mRNAs such as nanos (nos) and prevents their translation. Prevents translation of unlocalized nanos in the bulk cytoplasm via the recruitment of cup. The chain is Protein Smaug (smg) from Drosophila melanogaster (Fruit fly).